We begin with the raw amino-acid sequence, 508 residues long: Octopamine receptor beta-1R (508 aa).

The Extracellular segment spans residues 1–111 (MTLLQRLQAM…SHLALVFVKC (111 aa)). A helical transmembrane segment spans residues 112-132 (FIIGFIILAAILGNMLVIVSV). Topologically, residues 133-139 (MRHRKLR) are cytoplasmic. A helical transmembrane segment spans residues 140–160 (IITNYFVVSLAVADMLVALCA). Residues 161-186 (MTFNASVMISGKWMFGSVMCDMWNSF) are Extracellular-facing. Asn164 is a glycosylation site (N-linked (GlcNAc...) asparagine). The helical transmembrane segment at 187–209 (DVYFSTASIMHLCCISVDRYYAI) threads the bilayer. Topologically, residues 210–223 (VQPLDYPLIMTQRR) are cytoplasmic. A helical membrane pass occupies residues 224 to 244 (VFIMLLMVWLSPALLSFLPIC). The Extracellular portion of the chain corresponds to 245 to 270 (SGWYTTTENYKYLKSNPHICEFKVNK). The helical transmembrane segment at 271–291 (AYAIVSSSMSFWIPGIVMLSM) threads the bilayer. The Cytoplasmic segment spans residues 292–351 (YYRIYQEADRQERLVYRSKVAALLLEKHLQISQIPKPRPSIQVEQSTISTMRRERKAART). Residues 352–372 (LGIIMSAFLICWLPFFLWYIV) form a helical membrane-spanning segment. Topologically, residues 373–383 (SSLCDSCITPR) are extracellular. A helical membrane pass occupies residues 384–404 (LLVGILFWIGYFNSALNPIIY). Topologically, residues 405–508 (AYFNRDFRAA…MQQLHPLYTN (104 aa)) are cytoplasmic. The disordered stretch occupies residues 440–464 (RDLEFGGPSRRGTNGAQRTGSGSAE). The span at 450 to 461 (RGTNGAQRTGSG) shows a compositional bias: polar residues.

Belongs to the G-protein coupled receptor 1 family. In the adult, expressed in the superior protocerebrum and the optic lobe medulla of the central nervous system, nurse cells of egg chambers in the ovary at oogenic stages 1-10, and spermatogonia and spermatocytes in the testis. Expressed in embryonic and larval ventral nerve cord and brain lobe, and the larval imaginal disk and larval salivary gland. Also expressed in larval synaptic boutons and retinal cells in the optic disk.

The protein resides in the cell membrane. Functionally, autoreceptor for octopamine, which is a neurotransmitter, neurohormone, and neuromodulator in invertebrates. Negatively regulates synaptic growth by activating the inhibitory G protein Galphao and limiting cAMP production. Antagonizes the action of Octbeta2R which stimulates synaptic growth. In Drosophila melanogaster (Fruit fly), this protein is Octopamine receptor beta-1R.